The sequence spans 206 residues: Large ribosomal subunit protein uL4 (206 aa).

Residues 47–94 (NRAQKDRSEINKSTKKPFRQKGTGRARAGRASSPLWRGGGKVFPNSPD) form a disordered region. Over residues 49-58 (AQKDRSEINK) the composition is skewed to basic and acidic residues. Residues 59–74 (STKKPFRQKGTGRARA) are compositionally biased toward basic residues.

It belongs to the universal ribosomal protein uL4 family. As to quaternary structure, part of the 50S ribosomal subunit.

Functionally, one of the primary rRNA binding proteins, this protein initially binds near the 5'-end of the 23S rRNA. It is important during the early stages of 50S assembly. It makes multiple contacts with different domains of the 23S rRNA in the assembled 50S subunit and ribosome. In terms of biological role, forms part of the polypeptide exit tunnel. This chain is Large ribosomal subunit protein uL4, found in Laribacter hongkongensis (strain HLHK9).